The sequence spans 180 residues: Centromere protein M (180 aa).

The protein resides in the nucleus. It is found in the chromosome. It localises to the centromere. In terms of biological role, probable component of a centromeric complex involved in assembly of kinetochore proteins, mitotic progression and chromosome segregation. The sequence is that of Centromere protein M (cenpm) from Xenopus laevis (African clawed frog).